The following is a 198-amino-acid chain: Armadillo repeat-containing protein 7 (198 aa).

ARM repeat units follow at residues 57-99 (QVLD…QAGG) and 100-140 (LPLI…TSLP). The residue at position 169 (S169) is a Phosphoserine.

As to quaternary structure, component of the minor spliceosome. Within this complex, interacts with RBM48.

In terms of biological role, as a component of the minor spliceosome, involved in the splicing of U12-type introns in pre-mRNAs. The protein is Armadillo repeat-containing protein 7 (Armc7) of Mus musculus (Mouse).